The primary structure comprises 225 residues: Nuclear protein UL4 homolog (225 aa).

It belongs to the alphaherpesvirinae HHV-1 UL4 family.

It localises to the host nucleus. The chain is Nuclear protein UL4 homolog from Equus caballus (Horse).